Reading from the N-terminus, the 184-residue chain is Guanylate kinase (184 aa).

In terms of domain architecture, Guanylate kinase-like spans 5–183 (NGLIVITGPS…ALLEIKKLIK (179 aa)). 12–19 (GPSGVGKG) is an ATP binding site.

This sequence belongs to the guanylate kinase family.

The protein localises to the cytoplasm. The enzyme catalyses GMP + ATP = GDP + ADP. Its function is as follows. Essential for recycling GMP and indirectly, cGMP. The chain is Guanylate kinase from Prochlorococcus marinus (strain SARG / CCMP1375 / SS120).